The following is a 91-amino-acid chain: Large ribosomal subunit protein eL37 (91 aa).

Zn(2+)-binding residues include cysteine 19, cysteine 22, cysteine 34, and cysteine 37. The segment at 19–37 (CRRCGKSSFHIQKKTCASC) adopts a C4-type zinc-finger fold.

This sequence belongs to the eukaryotic ribosomal protein eL37 family. Zn(2+) is required as a cofactor.

Functionally, binds to the 23S rRNA. This is Large ribosomal subunit protein eL37 (rpl37) from Dictyostelium discoideum (Social amoeba).